A 955-amino-acid polypeptide reads, in one-letter code: Leucine--tRNA ligase (955 aa).

The 'HIGH' region signature appears at 66–77 (PYPSGSGLHVGH). Positions 725–729 (KMGKS) match the 'KMSKS' region motif. Lys-728 is an ATP binding site.

This sequence belongs to the class-I aminoacyl-tRNA synthetase family.

The protein localises to the cytoplasm. It catalyses the reaction tRNA(Leu) + L-leucine + ATP = L-leucyl-tRNA(Leu) + AMP + diphosphate. The chain is Leucine--tRNA ligase from Saccharopolyspora erythraea (strain ATCC 11635 / DSM 40517 / JCM 4748 / NBRC 13426 / NCIMB 8594 / NRRL 2338).